The following is a 196-amino-acid chain: SAGA-associated factor 11 homolog (196 aa).

The interval 1-22 (MSAANMPTTTGAQGSGNQVPTT) is disordered. The SGF11-type zinc-finger motif lies at 106–127 (CTCPNCDRLVAAARFAPHLEKC). The tract at residues 144-196 (TKEGATSAHLHSAGNTGGTDDEDDVDWSSDKRRKKSNQNSRNNGSKKNNGKSF) is disordered. Serine 172 carries the phosphoserine modification. Positions 180–196 (NQNSRNNGSKKNNGKSF) are enriched in low complexity.

This sequence belongs to the SGF11 family. Component of some SAGA transcription coactivator-HAT complexes, at least composed of Ada2b, not/nonstop, Pcaf/Gcn5, Sgf11 and Spt3. Within the SAGA complex, Sgf11, e(y)2, and not/nonstop form an additional subcomplex of SAGA called the DUB module (deubiquitination module). Interacts directly with not/nonstop. Interacts with the AMEX complex component xmas-2. Interacts with Cbp80; important for promoter recruitment of Sgf11 that is not associated with the DUB module.

Its subcellular location is the nucleus. It localises to the nucleoplasm. The protein resides in the cytoplasm. In terms of biological role, component of the transcription regulatory histone acetylation (HAT) complex SAGA, a multiprotein complex that activates transcription by remodeling chromatin and mediating histone acetylation and deubiquitination. Within the SAGA complex, participates in a subcomplex that specifically deubiquitinates histone H2B. The SAGA complex is recruited to specific gene promoters by activators, where it is required for transcription. Required for nuclear receptor-mediated transactivation. Binds independently on SAGA to promoters in an RNA-dependent manner. Binds to mRNA and is essential for total mRNA export from the nucleus. Required to counteract heterochromatin silencing. Controls the development of neuronal connectivity in visual system by being required for accurate axon targeting in the optic lobe. Required for expression of ecdysone-induced genes such as br/broad. The polypeptide is SAGA-associated factor 11 homolog (Drosophila erecta (Fruit fly)).